Reading from the N-terminus, the 143-residue chain is Large ribosomal subunit protein uL11 (143 aa).

Belongs to the universal ribosomal protein uL11 family. In terms of assembly, part of the ribosomal stalk of the 50S ribosomal subunit. Interacts with L10 and the large rRNA to form the base of the stalk. L10 forms an elongated spine to which L12 dimers bind in a sequential fashion forming a multimeric L10(L12)X complex. One or more lysine residues are methylated.

Its function is as follows. Forms part of the ribosomal stalk which helps the ribosome interact with GTP-bound translation factors. The sequence is that of Large ribosomal subunit protein uL11 from Ralstonia nicotianae (strain ATCC BAA-1114 / GMI1000) (Ralstonia solanacearum).